Here is a 353-residue protein sequence, read N- to C-terminus: Phospho-N-acetylmuramoyl-pentapeptide-transferase (353 aa).

10 helical membrane passes run 13-33 (ILGY…FFTL), 66-86 (TPTM…LISI), 88-108 (FSNL…IIGF), 130-150 (LILQ…LSDF), 162-182 (PLFD…IATS), 193-213 (GLAT…IYIT), 229-249 (IGEV…FLWY), 256-276 (VFMG…LAII), 281-301 (ILLL…ILQV), and 330-350 (KIIV…LITL).

The protein belongs to the glycosyltransferase 4 family. MraY subfamily. The cofactor is Mg(2+).

It localises to the cell inner membrane. The enzyme catalyses UDP-N-acetyl-alpha-D-muramoyl-L-alanyl-gamma-D-glutamyl-meso-2,6-diaminopimeloyl-D-alanyl-D-alanine + di-trans,octa-cis-undecaprenyl phosphate = di-trans,octa-cis-undecaprenyl diphospho-N-acetyl-alpha-D-muramoyl-L-alanyl-D-glutamyl-meso-2,6-diaminopimeloyl-D-alanyl-D-alanine + UMP. It functions in the pathway cell wall biogenesis; peptidoglycan biosynthesis. Functionally, catalyzes the initial step of the lipid cycle reactions in the biosynthesis of the cell wall peptidoglycan: transfers peptidoglycan precursor phospho-MurNAc-pentapeptide from UDP-MurNAc-pentapeptide onto the lipid carrier undecaprenyl phosphate, yielding undecaprenyl-pyrophosphoryl-MurNAc-pentapeptide, known as lipid I. The polypeptide is Phospho-N-acetylmuramoyl-pentapeptide-transferase (Sulfurimonas denitrificans (strain ATCC 33889 / DSM 1251) (Thiomicrospira denitrificans (strain ATCC 33889 / DSM 1251))).